Reading from the N-terminus, the 143-residue chain is Small ribosomal subunit protein uS9 (143 aa).

Residues 123 to 143 (RPEPKKFGGRGARARFQKSYR) are disordered. Positions 134–143 (ARARFQKSYR) are enriched in basic residues.

This sequence belongs to the universal ribosomal protein uS9 family.

In Eremothecium gossypii (strain ATCC 10895 / CBS 109.51 / FGSC 9923 / NRRL Y-1056) (Yeast), this protein is Small ribosomal subunit protein uS9 (RPS16).